Reading from the N-terminus, the 858-residue chain is Ubiquitin carboxyl-terminal hydrolase 5 (858 aa).

Ala-2 bears the N-acetylalanine mark. The interval 74–96 is disordered; sequence RRTRRPKEEDPTTGTGDPPRKKP. Lys-113 is covalently cross-linked (Glycyl lysine isopeptide (Lys-Gly) (interchain with G-Cter in SUMO)). Residues Ser-149 and Ser-156 each carry the phosphoserine modification. A UBP-type; degenerate zinc finger spans residues 175–283; the sequence is QVSKHAFSLK…EHLSHFGIDM (109 aa). Cys-195 and Cys-816 are joined by a disulfide. Positions 199 and 202 each coordinate Zn(2+). Residue Trp-209 participates in substrate binding. Position 219 (Cys-219) interacts with Zn(2+). Substrate is bound at residue 221–224; sequence RRYF. His-232 provides a ligand contact to Zn(2+). Positions 259, 261, and 264 each coordinate substrate. Thr-292 carries the phosphothreonine modification. The USP domain occupies 326 to 856; the sequence is TGIRNLGNSC…LGYIYFYQRV (531 aa). Residue Cys-335 is the Nucleophile of the active site. The residue at position 623 (Thr-623) is a Phosphothreonine. UBA domains are found at residues 654 to 695 and 722 to 762; these read MLDE…VMSH and PPPE…IFSH. Residues Ser-779, Ser-783, and Ser-785 each carry the phosphoserine modification. His-818 (proton acceptor) is an active-site residue.

It belongs to the peptidase C19 family. In terms of assembly, homodimer. Interacts with TRIML1. Ubiquitinated by SMURF1; leading to proteasomal degradation. Post-translationally, SUMOylated at Lys-113; SUMOylation affects the interaction with Cav3.2 channels.

Its subcellular location is the cytoplasm. It localises to the stress granule. The protein resides in the nucleus. It catalyses the reaction Thiol-dependent hydrolysis of ester, thioester, amide, peptide and isopeptide bonds formed by the C-terminal Gly of ubiquitin (a 76-residue protein attached to proteins as an intracellular targeting signal).. In terms of biological role, deubiquitinating enzyme that participates in a wide range of cellular processes by specifically cleaving isopeptide bonds between ubiquitin and substrate proteins or ubiquitin itself. Affects thereby important cellular signaling pathways such as NF-kappa-B, Wnt/beta-catenin, and cytokine production by regulating ubiquitin-dependent protein degradation. Participates in the activation of the Wnt signaling pathway by promoting FOXM1 deubiquitination and stabilization that induces the recruitment of beta-catenin to Wnt target gene promoter. Regulates the assembly and disassembly of heat-induced stress granules by mediating the hydrolysis of unanchored ubiquitin chains. Promotes lipopolysaccharide-induced apoptosis and inflammatory response by stabilizing the TXNIP protein. Affects T-cell biology by stabilizing the inhibitory receptor on T-cells PDC1. Acts as a negative regulator of autophagy by regulating ULK1 at both protein and mRNA levels. Acts also as a negative regulator of type I interferon production by simultaneously removing both 'Lys-48'-linked unanchored and 'Lys-63'-linked anchored polyubiquitin chains on the transcription factor IRF3. Modulates the stability of DNA mismatch repair protein MLH1 and counteracts the effect of the ubiquitin ligase UBR4. Upon activation by insulin, it gets phosphorylated through mTORC1-mediated phosphorylation to enhance YTHDF1 stability by removing 'Lys-11'-linked polyubiquitination. May also deubiquitinate other substrates such as the calcium channel CACNA1H. The protein is Ubiquitin carboxyl-terminal hydrolase 5 (UBP5) of Pongo abelii (Sumatran orangutan).